We begin with the raw amino-acid sequence, 401 residues long: Probable 2,3-bisphosphoglycerate-independent phosphoglycerate mutase (401 aa).

This sequence belongs to the BPG-independent phosphoglycerate mutase family. A-PGAM subfamily.

The catalysed reaction is (2R)-2-phosphoglycerate = (2R)-3-phosphoglycerate. The protein operates within carbohydrate degradation; glycolysis; pyruvate from D-glyceraldehyde 3-phosphate: step 3/5. Catalyzes the interconversion of 2-phosphoglycerate and 3-phosphoglycerate. This Thermotoga petrophila (strain ATCC BAA-488 / DSM 13995 / JCM 10881 / RKU-1) protein is Probable 2,3-bisphosphoglycerate-independent phosphoglycerate mutase.